Reading from the N-terminus, the 1478-residue chain is Fanconi anemia group D2 protein homolog (1478 aa).

Residues 33–53 form a disordered region; that stretch reads NISVESSSGGSEENIPASQEH. Positions 35–45 are enriched in low complexity; sequence SVESSSGGSEE. Lys595 is covalently cross-linked (Glycyl lysine isopeptide (Lys-Gly) (interchain with G-Cter in ubiquitin)). Disordered regions lie at residues 896-918 and 1420-1478; these read NQNQ…PEPD and TPRS…SKCF. Residues 1429–1442 are compositionally biased toward acidic residues; it reads ENSDDELPADDTSV. Basic residues predominate over residues 1468–1478; the sequence is RSKSSSRSKCF.

It belongs to the Fanconi anemia protein FANCD2 family. In terms of assembly, homodimer; cannot be ubiquitinated and does not bind DNA. Part of a Fanci-Fancd2 heterodimeric complex that binds and scans dsDNA for DNA damage. Interacts with Fancl (via C-terminus). Post-translationally, monoubiquitinated by Fancl in response to ionising radiation.

It localises to the nucleus. In terms of biological role, required for maintenance of chromosomal stability. Together with Fancl, and probably Fanci, involved in DNA repair of damage caused by agents that induce interstrand cross-links but not agents that cause double strand breaks. Required for S phase checkpoint activation in response to ionizing radiation induced DNA damage. This chain is Fanconi anemia group D2 protein homolog, found in Drosophila melanogaster (Fruit fly).